Here is a 201-residue protein sequence, read N- to C-terminus: Small ribosomal subunit protein uS4 (201 aa).

Positions 91–151 (SRLDNVVYRA…EKSRKMVWFD (61 aa)) constitute an S4 RNA-binding domain.

This sequence belongs to the universal ribosomal protein uS4 family. Part of the 30S ribosomal subunit. Contacts protein S5. The interaction surface between S4 and S5 is involved in control of translational fidelity.

Functionally, one of the primary rRNA binding proteins, it binds directly to 16S rRNA where it nucleates assembly of the body of the 30S subunit. In terms of biological role, with S5 and S12 plays an important role in translational accuracy. The protein is Small ribosomal subunit protein uS4 of Corynebacterium kroppenstedtii (strain DSM 44385 / JCM 11950 / CIP 105744 / CCUG 35717).